We begin with the raw amino-acid sequence, 210 residues long: Uracil phosphoribosyltransferase (210 aa).

Residues arginine 77, arginine 102, and 129-137 each bind 5-phospho-alpha-D-ribose 1-diphosphate; that span reads DPMLATGAS. Uracil contacts are provided by residues isoleucine 195 and 200–202; that span reads GDA. Residue aspartate 201 participates in 5-phospho-alpha-D-ribose 1-diphosphate binding.

The protein belongs to the UPRTase family. It depends on Mg(2+) as a cofactor.

The enzyme catalyses UMP + diphosphate = 5-phospho-alpha-D-ribose 1-diphosphate + uracil. The protein operates within pyrimidine metabolism; UMP biosynthesis via salvage pathway; UMP from uracil: step 1/1. With respect to regulation, allosterically activated by GTP. In terms of biological role, catalyzes the conversion of uracil and 5-phospho-alpha-D-ribose 1-diphosphate (PRPP) to UMP and diphosphate. In Mycoplasmoides gallisepticum (strain R(low / passage 15 / clone 2)) (Mycoplasma gallisepticum), this protein is Uracil phosphoribosyltransferase.